An 864-amino-acid polypeptide reads, in one-letter code: Leucine--tRNA ligase (864 aa).

Positions Pro-42–His-52 match the 'HIGH' region motif. The 'KMSKS' region signature appears at Lys-624–Ser-628. Lys-627 provides a ligand contact to ATP.

Belongs to the class-I aminoacyl-tRNA synthetase family.

The protein resides in the cytoplasm. It catalyses the reaction tRNA(Leu) + L-leucine + ATP = L-leucyl-tRNA(Leu) + AMP + diphosphate. The sequence is that of Leucine--tRNA ligase from Burkholderia cenocepacia (strain ATCC BAA-245 / DSM 16553 / LMG 16656 / NCTC 13227 / J2315 / CF5610) (Burkholderia cepacia (strain J2315)).